The chain runs to 350 residues: Galactokinase (350 aa).

Residue 14-17 (EHTD) participates in substrate binding. Residues S46 and 96 to 102 (GAGLSSS) each bind ATP. 2 residues coordinate Mg(2+): S102 and E134. D146 functions as the Proton acceptor in the catalytic mechanism. Y196 lines the substrate pocket.

The protein belongs to the GHMP kinase family. GalK subfamily.

It localises to the cytoplasm. The catalysed reaction is alpha-D-galactose + ATP = alpha-D-galactose 1-phosphate + ADP + H(+). It functions in the pathway carbohydrate metabolism; galactose metabolism. Catalyzes the transfer of the gamma-phosphate of ATP to D-galactose to form alpha-D-galactose-1-phosphate (Gal-1-P). The sequence is that of Galactokinase from Thermotoga neapolitana (strain ATCC 49049 / DSM 4359 / NBRC 107923 / NS-E).